The primary structure comprises 302 residues: RNA polymerase II holoenzyme cyclin-like subunit (302 aa).

The Cyclin N-terminal domain occupies 53–142 (QQLIKLGKRM…LGECEFSLIS (90 aa)).

Belongs to the cyclin family. Cyclin C subfamily. As to quaternary structure, component of the srb8-11 complex, a regulatory module of the Mediator complex.

It is found in the nucleus. Its function is as follows. Component of the srb8-11 complex. The srb8-11 complex is a regulatory module of the Mediator complex which is itself involved in regulation of basal and activated RNA polymerase II-dependent transcription. The srb8-11 complex may be involved in the transcriptional repression of a subset of genes regulated by Mediator. It may inhibit the association of the Mediator complex with RNA polymerase II to form the holoenzyme complex. The srb8-11 complex phosphorylates the C-terminal domain (CTD) of the largest subunit of RNA polymerase II. In Aspergillus clavatus (strain ATCC 1007 / CBS 513.65 / DSM 816 / NCTC 3887 / NRRL 1 / QM 1276 / 107), this protein is RNA polymerase II holoenzyme cyclin-like subunit (ssn8).